The sequence spans 392 residues: Na(+)/H(+) antiporter NhaA (392 aa).

11 helical membrane-spanning segments follow: residues 14 to 34 (AGGLILIFAAVVALFMANSPL), 59 to 79 (LLLWINDGLMAIFFLVVGLEV), 95 to 115 (IFPAIAALGGMLAPALIYLLF), 125 to 145 (GWAIPAATDIAFALGVMALLG), 154 to 174 (VFLLALAIIDDLGVIIIIALF), 179 to 199 (VSLQALGMAAAAIALLGYMNW), 213 to 233 (LVLWVCILKSGVHATLAGVIV), 254 to 274 (GLHPWVAYLILPLFAFANAGV), 287 to 307 (LLPLGIASGLFIGKPLGIFLF), 328 to 348 (IFAVSVLCGIGFTMSIFIASL), and 363 to 383 (LGILLGSTTAAVVGYSLLRLA).

The protein belongs to the NhaA Na(+)/H(+) (TC 2.A.33) antiporter family.

It is found in the cell inner membrane. It carries out the reaction Na(+)(in) + 2 H(+)(out) = Na(+)(out) + 2 H(+)(in). In terms of biological role, na(+)/H(+) antiporter that extrudes sodium in exchange for external protons. The protein is Na(+)/H(+) antiporter NhaA of Yersinia enterocolitica serotype O:8 / biotype 1B (strain NCTC 13174 / 8081).